The primary structure comprises 81 residues: UPF0349 protein SE_0633 (81 aa).

It belongs to the UPF0349 family.

This Staphylococcus epidermidis (strain ATCC 12228 / FDA PCI 1200) protein is UPF0349 protein SE_0633.